The sequence spans 190 residues: MFAGRLMVRSIVGRACLATMGRWSKPQAHASQVILPSTPAIAAVAIQCEEFTANRRLFSSQIETESTLDGATYERVCSDTLDALCDYFEELTENASELQGTDVAYSDGVLTVNLGGQHGTYVINRQTPNKQIWLSSPTSGPKRYDFVGTVAAGRWIYKHSGQSLHELLQQEIPGILKSQSVDFLRLPYCS.

The protein belongs to the frataxin family. Monomer (probable predominant form). Oligomer. Interacts with IscU. Component of the mitochondrial core iron-sulfur cluster (ISC) assembly complex at least composed of the cysteine desulfurase Nfs1, the scaffold protein IscU, the accessory protein bcn92/Isd11/Lyrm4, and probably fh/frataxin.

Its subcellular location is the mitochondrion. The catalysed reaction is 4 Fe(2+) + O2 + 4 H(+) = 4 Fe(3+) + 2 H2O. In terms of biological role, promotes the biosynthesis of heme as well as the assembly and repair of iron-sulfur clusters by delivering Fe(2+) to proteins involved in these pathways. May play a role in the protection against iron-catalyzed oxidative stress through its ability to catalyze the oxidation of Fe(2+) to Fe(3+). May be able to store large amounts of the metal in the form of a ferrihydrite mineral by oligomerization. Required for ecdysteroidogenesis in the prothoracic gland which is necessary for larval to pupal transition. This chain is Frataxin homolog, mitochondrial, found in Drosophila melanogaster (Fruit fly).